The chain runs to 482 residues: Phenylalanine--tRNA ligase alpha subunit (482 aa).

L-phenylalanine is bound by residues threonine 327, 366 to 368 (QIE), and tyrosine 406. Glutamate 408 contributes to the Mg(2+) binding site. Phenylalanine 430 serves as a coordination point for L-phenylalanine.

This sequence belongs to the class-II aminoacyl-tRNA synthetase family. Phe-tRNA synthetase alpha subunit type 2 subfamily. As to quaternary structure, tetramer of two alpha and two beta subunits. Mg(2+) serves as cofactor.

The protein localises to the cytoplasm. The enzyme catalyses tRNA(Phe) + L-phenylalanine + ATP = L-phenylalanyl-tRNA(Phe) + AMP + diphosphate + H(+). This chain is Phenylalanine--tRNA ligase alpha subunit, found in Thermoplasma volcanium (strain ATCC 51530 / DSM 4299 / JCM 9571 / NBRC 15438 / GSS1).